The chain runs to 272 residues: Imidazole glycerol phosphate synthase subunit HisF (272 aa).

Catalysis depends on residues aspartate 11 and aspartate 130.

The protein belongs to the HisA/HisF family. As to quaternary structure, heterodimer of HisH and HisF.

The protein resides in the cytoplasm. The enzyme catalyses 5-[(5-phospho-1-deoxy-D-ribulos-1-ylimino)methylamino]-1-(5-phospho-beta-D-ribosyl)imidazole-4-carboxamide + L-glutamine = D-erythro-1-(imidazol-4-yl)glycerol 3-phosphate + 5-amino-1-(5-phospho-beta-D-ribosyl)imidazole-4-carboxamide + L-glutamate + H(+). The protein operates within amino-acid biosynthesis; L-histidine biosynthesis; L-histidine from 5-phospho-alpha-D-ribose 1-diphosphate: step 5/9. Functionally, IGPS catalyzes the conversion of PRFAR and glutamine to IGP, AICAR and glutamate. The HisF subunit catalyzes the cyclization activity that produces IGP and AICAR from PRFAR using the ammonia provided by the HisH subunit. The polypeptide is Imidazole glycerol phosphate synthase subunit HisF (Methanococcus maripaludis (strain C7 / ATCC BAA-1331)).